A 102-amino-acid chain; its full sequence is uncharacterized protein (102 aa).

Residues 1–43 form a disordered region; it reads MNNAHEENISSVTGFKSTSGSPAIGSSLPGRSGEGRSSSSSSG. A compositionally biased stretch (polar residues) spans 9-21; that stretch reads ISSVTGFKSTSGS. The segment covering 25–43 has biased composition (low complexity); sequence GSSLPGRSGEGRSSSSSSG.

This is an uncharacterized protein from Saccharomyces cerevisiae (strain ATCC 204508 / S288c) (Baker's yeast).